The sequence spans 378 residues: MKILVDENMPYARELFSRLGEVKAVPGRPIPVEELNHADALMVRSVTKVNESLLSGTPINFVGTATAGTDHVDEAWLKQAGIGFSAAPGCNAIAVVEYVFSALLMLAERDGFSLRDRTIGIVGVGNVGSRLQTRLEALGIRTLLCDPPRAARGDEGDFRTLDELVQEADVLTFHTPLYKDGPYKTLHLADETLIRRLKPGVILINACRGPVVDNAALLARLNAGQPLSVVLDVWEGEPDLNVALLEAVDIGTSHIAGYTLEGKARGTTQVFEAYSAFIGREQRVALETLLPAPEFDRITLHGPLDQPTLKRLAHLVYDVRRDDAPLRKVAGIPGEFDKLRKNYLERREWSSLYVMCDDETAAALLCKLGFNAVHHPAH.

The substrate site is built by serine 45 and threonine 66. Positions 146 and 175 each coordinate NAD(+). Arginine 208 is a catalytic residue. Aspartate 232 contributes to the NAD(+) binding site. Residue glutamate 237 is part of the active site. Histidine 254 serves as the catalytic Proton donor. An NAD(+)-binding site is contributed by glycine 257. Tyrosine 258 is a binding site for substrate.

Belongs to the D-isomer specific 2-hydroxyacid dehydrogenase family. PdxB subfamily. In terms of assembly, homodimer.

The protein resides in the cytoplasm. It catalyses the reaction 4-phospho-D-erythronate + NAD(+) = (R)-3-hydroxy-2-oxo-4-phosphooxybutanoate + NADH + H(+). Its pathway is cofactor biosynthesis; pyridoxine 5'-phosphate biosynthesis; pyridoxine 5'-phosphate from D-erythrose 4-phosphate: step 2/5. In terms of biological role, catalyzes the oxidation of erythronate-4-phosphate to 3-hydroxy-2-oxo-4-phosphonooxybutanoate. The polypeptide is Erythronate-4-phosphate dehydrogenase (Salmonella paratyphi A (strain ATCC 9150 / SARB42)).